Consider the following 288-residue polypeptide: Histone-lysine N-methyltransferase Suv4-20 (288 aa).

In terms of domain architecture, SET spans 128 to 238; that stretch reads QECKRYSQEG…PGDEITCFYG (111 aa).

It belongs to the class V-like SAM-binding methyltransferase superfamily. Histone-lysine methyltransferase family. Suvar4-20 subfamily.

It is found in the nucleus. The protein resides in the chromosome. It carries out the reaction N(6)-methyl-L-lysyl(20)-[histone H4] + S-adenosyl-L-methionine = N(6),N(6)-dimethyl-L-lysyl(20)-[histone H4] + S-adenosyl-L-homocysteine + H(+). It catalyses the reaction N(6),N(6)-dimethyl-L-lysyl(20)-[histone H4] + S-adenosyl-L-methionine = N(6),N(6),N(6)-trimethyl-L-lysyl(20)-[histone H4] + S-adenosyl-L-homocysteine + H(+). In terms of biological role, histone methyltransferase that specifically di- and trimethylates 'Lys-20' of histone H4 (H4K20me2/me3). H4 'Lys-20' trimethylation represents a specific tag for epigenetic transcriptional repression. Contributes to dosage compensation of X chromosome-relative to autosome-linked gene expression, possibly by converting H4K20me1 to H4K20m2/me3 on autosomes. Involved in the regulation of growth and body fat metabolism downstream of the TOR complex 2 pathway. The protein is Histone-lysine N-methyltransferase Suv4-20 (set-4) of Caenorhabditis elegans.